Consider the following 292-residue polypeptide: Arabinose operon regulatory protein (292 aa).

Alpha-L-arabinopyanose-binding residues include Pro8, Thr24, Arg38, Tyr82, and His93. The HTH araC/xylS-type domain occupies 180–279; sequence REACQYISDH…GASPSEFRAG (100 aa). 2 DNA-binding regions (H-T-H motif) span residues 198–219 and 246–269; these read ASVAQHVCLSPSRLSHLFRQQL and IATVGRNVGFDDQLYFSRVFKKCT.

Homodimer.

It is found in the cytoplasm. With respect to regulation, arabinose converts the repressor form of AraC to the activator form to regulate the araBAD promoter. In the absence of arabinose, AraC binds to the araO2 and araI1 half-sites in the promoter region of the araBAD operon, leading to the formation of a DNA loop that blocks access of RNA polymerase to the promoter. In the presence of arabinose and the cyclic AMP receptor protein (CRP), it binds to the adjacent half-sites araI1 and araI2, leading to the binding of RNA polymerase to the promoter region and transcription of the araBAD operon. AraI1 acts as a switch mechanism allowing both the repressor and the activator forms of AraC protein to regulate the araBAD promoter. Inhibited by D-fucose, which binds competitively to the same site on the protein. In terms of biological role, transcription factor that regulates the expression of several genes involved in the transport and metabolism of L-arabinose. Functions both as a positive and a negative regulator. In the presence of arabinose, activates the expression of the araBAD, araE, araFGH and araJ promoters. In the absence of arabinose, negatively regulates the araBAD operon. Represses its own transcription. Acts by binding directly to DNA. In Escherichia coli (strain K12), this protein is Arabinose operon regulatory protein.